The primary structure comprises 155 residues: Putative pre-16S rRNA nuclease (155 aa).

The protein belongs to the YqgF nuclease family.

The protein localises to the cytoplasm. In terms of biological role, could be a nuclease involved in processing of the 5'-end of pre-16S rRNA. The polypeptide is Putative pre-16S rRNA nuclease (Xanthomonas euvesicatoria pv. vesicatoria (strain 85-10) (Xanthomonas campestris pv. vesicatoria)).